We begin with the raw amino-acid sequence, 380 residues long: MAPNLRKSHPLLKTINNSLIDLPTPSNISAWWNFGSLLGICLATQILTGLLLAAHYTADTTLAFSSVAHTCRNVQYGWLIRNLHANGASFFFICIYLHIGRGLYYGSYLYKETWNTGIILLLTLMATAFVGYVLPWGQMSFWGATVITNLFSAIPYIGQTLVEWAWGGFSVDNPTLTRFFTLHFLLPFMIAGLTLIHLTFLHESGSNNPLGIVANSDKIPFHPYYSTKDILGFILLLLPLTTLALFSPNLLGDPENFTPANPLVTPPHIKPEWYFLFAYAILRSIPNKLGGVLALAASVLILFLIPLLHKSKQRTMTFRPLSQLLFWTLVANLTILTWIGSQPVEHPFIIIGQLASLTYFTILLILFPLIGTLENKMLNH.

The next 4 membrane-spanning stretches (helical) occupy residues 34-54, 78-99, 114-134, and 179-199; these read FGSL…LLAA, WLIR…YLHI, WNTG…GYVL, and FFTL…IHLT. Residues His84 and His98 each contribute to the heme b site. Heme b contacts are provided by His183 and His197. His202 is a binding site for a ubiquinone. Transmembrane regions (helical) follow at residues 227-247, 289-309, 321-341, and 348-368; these read TKDI…ALFS, LGGV…PLLH, LSQL…WIGS, and FIII…ILFP.

Belongs to the cytochrome b family. The cytochrome bc1 complex contains 11 subunits: 3 respiratory subunits (MT-CYB, CYC1 and UQCRFS1), 2 core proteins (UQCRC1 and UQCRC2) and 6 low-molecular weight proteins (UQCRH/QCR6, UQCRB/QCR7, UQCRQ/QCR8, UQCR10/QCR9, UQCR11/QCR10 and a cleavage product of UQCRFS1). This cytochrome bc1 complex then forms a dimer. Heme b serves as cofactor.

It is found in the mitochondrion inner membrane. Component of the ubiquinol-cytochrome c reductase complex (complex III or cytochrome b-c1 complex) that is part of the mitochondrial respiratory chain. The b-c1 complex mediates electron transfer from ubiquinol to cytochrome c. Contributes to the generation of a proton gradient across the mitochondrial membrane that is then used for ATP synthesis. The chain is Cytochrome b (MT-CYB) from Eudyptes chrysocome (Western rockhopper penguin).